We begin with the raw amino-acid sequence, 198 residues long: Phosphoheptose isomerase (198 aa).

The 163-residue stretch at 36-198 (MIGSLLNNGK…DCLLLGVEDQ (163 aa)) folds into the SIS domain. 51-53 (NGG) provides a ligand contact to substrate. Positions 60 and 64 each coordinate Zn(2+). Residues Glu-64, 93–94 (ND), 119–121 (STS), Ser-124, and Gln-174 contribute to the substrate site. Gln-174 and His-182 together coordinate Zn(2+).

The protein belongs to the SIS family. GmhA subfamily. As to quaternary structure, homotetramer. The cofactor is Zn(2+).

The protein localises to the cytoplasm. It catalyses the reaction 2 D-sedoheptulose 7-phosphate = D-glycero-alpha-D-manno-heptose 7-phosphate + D-glycero-beta-D-manno-heptose 7-phosphate. The protein operates within carbohydrate biosynthesis; D-glycero-D-manno-heptose 7-phosphate biosynthesis; D-glycero-alpha-D-manno-heptose 7-phosphate and D-glycero-beta-D-manno-heptose 7-phosphate from sedoheptulose 7-phosphate: step 1/1. In terms of biological role, catalyzes the isomerization of sedoheptulose 7-phosphate in D-glycero-D-manno-heptose 7-phosphate. The protein is Phosphoheptose isomerase of Aromatoleum aromaticum (strain DSM 19018 / LMG 30748 / EbN1) (Azoarcus sp. (strain EbN1)).